Reading from the N-terminus, the 118-residue chain is Large ribosomal subunit protein bL20 (118 aa).

It belongs to the bacterial ribosomal protein bL20 family.

Its function is as follows. Binds directly to 23S ribosomal RNA and is necessary for the in vitro assembly process of the 50S ribosomal subunit. It is not involved in the protein synthesizing functions of that subunit. In Pseudoalteromonas atlantica (strain T6c / ATCC BAA-1087), this protein is Large ribosomal subunit protein bL20.